An 822-amino-acid chain; its full sequence is Calpain-3 (822 aa).

Positions 1–36 (MPTVISASVAPRTGAEPRSPGPIAQAAQGKGTEAGG) are disordered. Residues 74-418 (LFVDPEFPPD…FTKLEICNLT (345 aa)) enclose the Calpain catalytic domain. Catalysis depends on residues C129, H335, and N359. A domain III region spans residues 419 to 587 (ADALESDKLQ…KRNLSEEVEN (169 aa)). Residues 588 to 649 (TISVDRPVKK…LKPGNIDQES (62 aa)) form a linker region. Residues 600–651 (PKPIIFGSDRANSNKELGVDQESEEGKDNTSPDKQAKSPQLKPGNIDQESKE) are disordered. Over residues 623 to 635 (EEGKDNTSPDKQA) the composition is skewed to basic and acidic residues. EF-hand domains follow at residues 650–684 (KEQR…VVNK), 693–726 (FTLE…KKIK), 723–758 (KKIK…AGFH), and 788–822 (VRLE…TMYA). Residues 650–822 (KEQRQFRNIF…LEWLQLTMYA (173 aa)) form a domain IV region. 18 residues coordinate Ca(2+): A663, D666, E668, E673, D706, D708, S710, R712, E717, D736, D738, S740, T742, E747, D801, D803, D805, and I807.

Belongs to the peptidase C2 family. Homodimer; via EF-hand domain 4. Interacts with TTN/titin. Interacts with CMYA5; this interaction, which results in CMYA5 proteolysis, may protect CAPN3 from autolysis. Interacts with SIMC1. Interacts with UTP25; the interaction is required for CAPN3 translocation to the nucleolus. Skeletal muscle.

The protein resides in the cytoplasm. It is found in the nucleus. It localises to the nucleolus. It catalyses the reaction Broad endopeptidase activity.. Its activity is regulated as follows. Activated by micromolar concentrations of calcium and inhibited by calpastatin. Functionally, calcium-regulated non-lysosomal thiol-protease. Proteolytically cleaves CTBP1. Mediates, with UTP25, the proteasome-independent degradation of p53/TP53. This chain is Calpain-3 (CAPN3), found in Ovis aries (Sheep).